We begin with the raw amino-acid sequence, 309 residues long: Olfactory receptor 5H2 (309 aa).

Over 1–28 the chain is Extracellular; it reads MEQDNTTLLTEFVLTGLTYQPEWKMPLF. Asn-5 carries N-linked (GlcNAc...) asparagine glycosylation. A helical transmembrane segment spans residues 29-49; it reads LVFLVIYLITIVWNLGLIALI. The Cytoplasmic portion of the chain corresponds to 50-56; that stretch reads WNDPQLH. Residues 57 to 77 traverse the membrane as a helical segment; that stretch reads IPMYFFLGSLAFVDAWISSTV. Topologically, residues 78-97 are extracellular; the sequence is TPKMLVNFLAKNRMISLSEC. A disulfide bridge connects residues Cys-97 and Cys-179. Residues 98–118 form a helical membrane-spanning segment; sequence MIQFFSFAFGGTTECFLLATM. Residues 119-143 lie on the Cytoplasmic side of the membrane; it reads AYDRYVAICKPLLYPVIMNNSLCIR. The helical transmembrane segment at 144 to 164 threads the bilayer; sequence LLAFSFLGGFLHALIHEVLIF. At 165-193 the chain is on the extracellular side; it reads RLTFCNSNIIHHFYCDIIPLFMISCTDPS. Residues 194–214 traverse the membrane as a helical segment; it reads INFLMVFILSGSIQVFTIVTV. The Cytoplasmic segment spans residues 215–239; that stretch reads LNSYTFALFTILKKKSVRGVRKAFS. A helical membrane pass occupies residues 240–260; the sequence is TCGAHLLSVSLYYGPLIFMYL. The Extracellular portion of the chain corresponds to 261 to 271; it reads RPASPQADDQD. The helical transmembrane segment at 272-292 threads the bilayer; it reads MIDSVFYTIIIPLLNPIIYSL. The Cytoplasmic portion of the chain corresponds to 293–309; that stretch reads RNKQVIDSFTKMVKRNV.

It belongs to the G-protein coupled receptor 1 family.

Its subcellular location is the cell membrane. Its function is as follows. Odorant receptor. The protein is Olfactory receptor 5H2 (OR5H2) of Homo sapiens (Human).